A 437-amino-acid polypeptide reads, in one-letter code: GTPase Era, mitochondrial (437 aa).

The N-terminal 20 residues, 1-20 (MAAPRRYFPGIVRALLGAWQ), are a transit peptide targeting the mitochondrion. The Era-type G domain occupies 112 to 330 (RVLRVVLLGA…QYLLTQAQPG (219 aa)). The segment at 120 to 127 (GAPNAGKS) is G1. 120–127 (GAPNAGKS) provides a ligand contact to GTP. A G2 region spans residues 146–150 (HTTRC). Positions 167–170 (DTPG) are G3. 167–171 (DTPGI) contacts GTP. Ser-173 carries the phosphoserine modification. GTP is bound at residue 236-239 (NKVD). Residues 236–239 (NKVD) form a G4 region. Residues 272 to 293 (SRPSTHCPGPETEDPNTHAVRS) form a disordered region. Residues 308–310 (LSA) form a G5 region. The region spanning 360–437 (LPEEVPYSVQ…LLRLSVKLLK (78 aa)) is the KH type-2 domain.

It belongs to the TRAFAC class TrmE-Era-EngA-EngB-Septin-like GTPase superfamily. Era GTPase family.

It localises to the mitochondrion matrix. The protein resides in the mitochondrion inner membrane. Functionally, probable GTPase that plays a role in the mitochondrial ribosomal small subunit assembly. Specifically binds the 12S mitochondrial rRNA (12S mt-rRNA) to a 33 nucleotide section delineating the 3' terminal stem-loop region. May act as a chaperone that protects the 12S mt-rRNA on the 28S mitoribosomal subunit during ribosomal small subunit assembly. The protein is GTPase Era, mitochondrial (Eral1) of Rattus norvegicus (Rat).